The primary structure comprises 288 residues: Oxaloacetate decarboxylase (288 aa).

Residue S47 coordinates substrate. Residue D85 coordinates Mg(2+). Residues R156 and H232 each contribute to the substrate site.

Belongs to the isocitrate lyase/PEP mutase superfamily. Oxaloacetate decarboxylase family. Homotetramer; dimer of dimers. Requires Mg(2+) as cofactor.

The catalysed reaction is oxaloacetate + H(+) = pyruvate + CO2. Its function is as follows. Catalyzes the decarboxylation of oxaloacetate into pyruvate. Seems to play a role in maintaining cellular concentrations of bicarbonate and pyruvate. This Bradyrhizobium sp. (strain ORS 278) protein is Oxaloacetate decarboxylase.